We begin with the raw amino-acid sequence, 727 residues long: MLRIPVRKALVGLSKSSKGCVRTTATAASNLIEVFVDGQSVMVEPGTTVLQACEKVGMQIPRFCYHERLSVAGNCRMCLVEIEKAPKVVAACAMPVMKGWNILTNSEKTKKAREGVMEFLLANHPLDCPICDQGGECDLQDQSMMFGSDRSRFLEGKRAVEDKNIGPLVKTIMTRCIQCTRCIRFASEIAGVDDLGTTGRGNDMQVGTYIEKMFMSELSGNIIDICPVGALTSKPYAFTARPWETRKTESIDVMDAVGSNIVVSTRTGEVMRILPRMHEDINEEWISDKTRFAYDGLKRQRLTEPMVRNEKGLLTHTTWEDALSRVAGMLQSFQGNDVAAIAGGLVDAEALIALKDLLNRVDSDTLCTEEVFPTAGAGTDLRSNYLLNTTIAGVEEADVVLLVGTNPRFEAPLFNARIRKSWLHNDLKVALIGSPVDLTYRYDHLGDSPKILQDIASGSHPFSQVLQEAKKPMVILGSSALQRNDGAAILAAVSNIAQKIRTSSGVTGDWKVMNILHRIASQVAALDLGYKPGVEAIQKNPPKMLFLLGADGGCITRQDLPKDCFIVYQGHHGDVGAPIADVILPGAAYTEKSATYVNTEGRAQQTKVAVTPPGLAREDWKIIRALSEIAGMTLPYDTLDQVRNRLEEVSPNLVRYDDVEGANYFQQASELSKLVNQQLLADPLVPPQLTIKDFYMTDSISRASQTMAKCVKAVTEGAHAVEEPSIC.

The transit peptide at 1 to 23 (MLRIPVRKALVGLSKSSKGCVRT) directs the protein to the mitochondrion. One can recognise a 2Fe-2S ferredoxin-type domain in the interval 30-108 (NLIEVFVDGQ…GWNILTNSEK (79 aa)). Residues Cys-64, Cys-75, and Cys-78 each coordinate [2Fe-2S] cluster. N6-acetyllysine is present on Lys-84. Cys-92 provides a ligand contact to [2Fe-2S] cluster. A 4Fe-4S His(Cys)3-ligated-type domain is found at 108 to 147 (KTKKAREGVMEFLLANHPLDCPICDQGGECDLQDQSMMFG). Residues His-124, Cys-128, Cys-131, Cys-137, Cys-176, Cys-179, Cys-182, and Cys-226 each contribute to the [4Fe-4S] cluster site. The 4Fe-4S Mo/W bis-MGD-type domain occupies 245–301 (TRKTESIDVMDAVGSNIVVSTRTGEVMRILPRMHEDINEEWISDKTRFAYDGLKRQR). 2 positions are modified to N6-acetyllysine: Lys-499 and Lys-709.

It belongs to the complex I 75 kDa subunit family. Core subunit of respiratory chain NADH dehydrogenase (Complex I) which is composed of 45 different subunits. This is the largest subunit of complex I and it is a component of the iron-sulfur (IP) fragment of the enzyme. Complex I associates with ubiquinol-cytochrome reductase complex (Complex III) to form supercomplexes. Interacts with MDM2 and AKAP1. It depends on [2Fe-2S] cluster as a cofactor. [4Fe-4S] cluster is required as a cofactor.

It localises to the mitochondrion inner membrane. The enzyme catalyses a ubiquinone + NADH + 5 H(+)(in) = a ubiquinol + NAD(+) + 4 H(+)(out). Its function is as follows. Core subunit of the mitochondrial membrane respiratory chain NADH dehydrogenase (Complex I) which catalyzes electron transfer from NADH through the respiratory chain, using ubiquinone as an electron acceptor. Essential for catalysing the entry and efficient transfer of electrons within complex I. Plays a key role in the assembly and stability of complex I and participates in the association of complex I with ubiquinol-cytochrome reductase complex (Complex III) to form supercomplexes. The sequence is that of NADH-ubiquinone oxidoreductase 75 kDa subunit, mitochondrial (NDUFS1) from Bos taurus (Bovine).